The sequence spans 489 residues: Betaine aldehyde dehydrogenase (489 aa).

Residues Thr-26 and Asp-93 each contribute to the K(+) site. 150 to 152 (GAW) lines the NAD(+) pocket. Lys-162 acts as the Charge relay system in catalysis. 176–179 (KPSE) contributes to the NAD(+) binding site. Residue Val-180 coordinates K(+). 229–232 (GVET) contacts NAD(+). Leu-245 serves as a coordination point for K(+). Residue Glu-251 is the Proton acceptor of the active site. NAD(+)-binding residues include Gly-253, Cys-285, and Glu-386. Cys-285 serves as the catalytic Nucleophile. A Cysteine sulfenic acid (-SOH) modification is found at Cys-285. K(+) is bound by residues Lys-456 and Gly-459. Glu-463 serves as the catalytic Charge relay system.

Belongs to the aldehyde dehydrogenase family. As to quaternary structure, dimer of dimers. It depends on K(+) as a cofactor.

The catalysed reaction is betaine aldehyde + NAD(+) + H2O = glycine betaine + NADH + 2 H(+). Its pathway is amine and polyamine biosynthesis; betaine biosynthesis via choline pathway; betaine from betaine aldehyde: step 1/1. Functionally, involved in the biosynthesis of the osmoprotectant glycine betaine. Catalyzes the irreversible oxidation of betaine aldehyde to the corresponding acid. This is Betaine aldehyde dehydrogenase from Burkholderia ambifaria (strain MC40-6).